A 209-amino-acid chain; its full sequence is MEPLAAYPLKCSGPRAKVFAVLLSIVLCTVTLFLLQLKFLKPKINSFYAFEVKDAKGRTVSLEKYKGKVSLVVNVASDCQLTDRNYLGLKELHKEFGPSHFSVLAFPCNQFGESEPRPSKEVESFARKNYGVTFPIFHKIKILGSEGEPAFRFLVDSSKKEPRWNFWKYLVNPEGQVVKFWKPEEPIEVIRPDIAALVRQVIIKKKEDL.

N-acetylmethionine is present on methionine 1. A helical transmembrane segment spans residues 18-40 (VFAVLLSIVLCTVTLFLLQLKFL). Cysteine 79 is a catalytic residue.

The protein belongs to the glutathione peroxidase family.

Its subcellular location is the membrane. It catalyses the reaction 2 glutathione + H2O2 = glutathione disulfide + 2 H2O. The chain is Probable glutathione peroxidase 8 (GPX8) from Homo sapiens (Human).